The primary structure comprises 464 residues: Putative guanine nucleotide-binding protein subunit alpha (464 aa).

The G-alpha domain occupies 33-415; that stretch reads HSKLKRGDGP…ETKRDKYNEK (383 aa). Residues 36 to 49 form a G1 motif region; that stretch reads LKRGDGPGESGKST. GTP contacts are provided by residues 41 to 48, 147 to 151, 214 to 220, 239 to 243, 268 to 271, and 310 to 313; these read GPGESGKS, DVGGQ, LRSRTKT, RNRD, and TSQS. Ser-48 lines the Mg(2+) pocket. Positions 212–220 are G2 motif; that stretch reads DVLRSRTKT. Residue Thr-220 coordinates Mg(2+). The segment at 235–244 is G3 motif; that stretch reads FRMVDVGGQR. Residues 306–313 form a G4 motif region; it reads VMFLTSQS. Residues 382–387 form a G5 motif region; the sequence is GYSGTC.

The protein in the N-terminal section; belongs to the G-alpha family. In the C-terminal section; belongs to the class-II aminoacyl-tRNA synthetase family. G proteins are composed of 3 units; alpha, beta and gamma. The alpha chain contains the guanine nucleotide binding site.

Guanine nucleotide-binding proteins (G proteins) are involved as modulators or transducers in various transmembrane signaling systems. This chain is Putative guanine nucleotide-binding protein subunit alpha, found in Leishmania donovani.